The primary structure comprises 131 residues: MYRAVTRQIEVTVEPNFLPEKSSVADGRWFWSYTVVITNTGEDTVKLRSRHWIITDGVGRQQEVRGEGVVGEQPVLAPGERFEYTSGVPLTTASGFMAGSYQMESASGEQFDIAVPAFSLDSPDGGKRVLN.

The ApaG domain maps to 3–127 (RAVTRQIEVT…FSLDSPDGGK (125 aa)).

The chain is Protein ApaG from Bradyrhizobium sp. (strain BTAi1 / ATCC BAA-1182).